A 73-amino-acid polypeptide reads, in one-letter code: Antimicrobial peptide TsAP-1 (73 aa).

Positions 1–22 are cleaved as a signal peptide; the sequence is MQIKHLITLFFLVLIVADQCSA. A Lysine amide modification is found at lysine 39. Positions 45–73 are excised as a propeptide; the sequence is EISAQIEQYKDLQKREAELEELLDRLPMY.

Expressed by the venom gland.

It is found in the secreted. Functionally, has a low antimicrobial activity against S.aureus, E.coli, and C.albicans (MICs 120-160 uM). Has a low hemolytic activity (4% at 160 uM). Also inhibits the growth of two cancer cell lines on a total of five (the squamous carcinoma cell line H157 (IC(50)=55.9 uM) and the lung adenocarcinoma cell line H838 (IC(50)=52.5 uM)). The polypeptide is Antimicrobial peptide TsAP-1 (Tityus serrulatus (Brazilian scorpion)).